The sequence spans 602 residues: Elongation factor 4 (602 aa).

Residues 7 to 189 (RNIRNFSIIA…AIVQRIPAPQ (183 aa)) form the tr-type G domain. Residues 19 to 24 (DHGKST) and 136 to 139 (NKID) contribute to the GTP site.

Belongs to the TRAFAC class translation factor GTPase superfamily. Classic translation factor GTPase family. LepA subfamily.

It is found in the cell inner membrane. It catalyses the reaction GTP + H2O = GDP + phosphate + H(+). In terms of biological role, required for accurate and efficient protein synthesis under certain stress conditions. May act as a fidelity factor of the translation reaction, by catalyzing a one-codon backward translocation of tRNAs on improperly translocated ribosomes. Back-translocation proceeds from a post-translocation (POST) complex to a pre-translocation (PRE) complex, thus giving elongation factor G a second chance to translocate the tRNAs correctly. Binds to ribosomes in a GTP-dependent manner. This Xylella fastidiosa (strain M12) protein is Elongation factor 4.